We begin with the raw amino-acid sequence, 232 residues long: Large ribosomal subunit protein uL1 (232 aa).

This sequence belongs to the universal ribosomal protein uL1 family. In terms of assembly, part of the 50S ribosomal subunit.

Functionally, binds directly to 23S rRNA. The L1 stalk is quite mobile in the ribosome, and is involved in E site tRNA release. Protein L1 is also a translational repressor protein, it controls the translation of the L11 operon by binding to its mRNA. This chain is Large ribosomal subunit protein uL1, found in Azobacteroides pseudotrichonymphae genomovar. CFP2.